We begin with the raw amino-acid sequence, 151 residues long: 3-dehydroquinate dehydratase 1 (151 aa).

Y23 serves as the catalytic Proton acceptor. Positions 75, 81, and 88 each coordinate substrate. H101 serves as the catalytic Proton donor. Substrate-binding positions include 102–103 (LS) and R112.

This sequence belongs to the type-II 3-dehydroquinase family. In terms of assembly, homododecamer.

The catalysed reaction is 3-dehydroquinate = 3-dehydroshikimate + H2O. It participates in metabolic intermediate biosynthesis; chorismate biosynthesis; chorismate from D-erythrose 4-phosphate and phosphoenolpyruvate: step 3/7. Functionally, catalyzes a trans-dehydration via an enolate intermediate. This is 3-dehydroquinate dehydratase 1 (aroQ1) from Pseudomonas putida (strain ATCC 47054 / DSM 6125 / CFBP 8728 / NCIMB 11950 / KT2440).